The primary structure comprises 190 residues: dCTP deaminase (190 aa).

113-118 contributes to the dCTP binding site; that stretch reads KSTYAR. Residue glutamate 139 is the Proton donor/acceptor of the active site. 4 residues coordinate dCTP: glutamine 158, tyrosine 172, lysine 181, and glutamine 182.

The protein belongs to the dCTP deaminase family. As to quaternary structure, homotrimer.

The catalysed reaction is dCTP + H2O + H(+) = dUTP + NH4(+). It participates in pyrimidine metabolism; dUMP biosynthesis; dUMP from dCTP (dUTP route): step 1/2. Functionally, catalyzes the deamination of dCTP to dUTP. The chain is dCTP deaminase from Chlamydia pneumoniae (Chlamydophila pneumoniae).